The following is a 236-amino-acid chain: Probable 2-phosphosulfolactate phosphatase (236 aa).

This sequence belongs to the ComB family. Mg(2+) serves as cofactor.

It carries out the reaction (2R)-O-phospho-3-sulfolactate + H2O = (2R)-3-sulfolactate + phosphate. This is Probable 2-phosphosulfolactate phosphatase from Gloeobacter violaceus (strain ATCC 29082 / PCC 7421).